Here is a 674-residue protein sequence, read N- to C-terminus: CLK4-associating serine/arginine rich protein (674 aa).

At S101 the chain carries Phosphoserine. 2 disordered regions span residues 171-232 (TVAE…GMAD) and 258-674 (EKAM…HYRH). The segment covering 182-214 (PEEEESAAEEESNSDEDEVIPDIDVEVDVDELN) has biased composition (acidic residues). The span at 265–283 (RRSRRQRREFREKRLRGRK) shows a compositional bias: basic residues. Phosphoserine occurs at positions 285 and 294. Basic and acidic residues predominate over residues 290-313 (ARRDSPTYDPYKRSPSESSSESRS). Phosphothreonine is present on T327. Residues S331 and S335 each carry the phosphoserine modification. Positions 356-365 (PPAPPQPGGP) are enriched in pro residues. The segment covering 378 to 399 (SSSSSSSSASRTSSSRSSSRSS) has biased composition (low complexity). Basic residues-rich tracts occupy residues 411-443 (SGRH…RRHS) and 481-492 (RGGRGLRHHSSS). 2 stretches are compositionally biased toward low complexity: residues 493–506 (RSRS…SRSR) and 514–532 (HSPS…SQSP). S547 bears the Phosphoserine mark. Phosphothreonine is present on T573. A coiled-coil region spans residues 585–647 (ALNRQFKADK…ERQYSRQSRS (63 aa)). Composition is skewed to basic and acidic residues over residues 590–617 (FKAD…ELRA) and 625–641 (KERE…ERQY). Residues 642 to 651 (SRQSRSPSPR) show a composition bias toward low complexity. Basic residues predominate over residues 659–674 (SRRRSRSRSRSPHYRH).

This sequence belongs to the splicing factor SR family. In terms of assembly, probably interacts with CLK4. Phosphorylated in vitro by CLK4.

It is found in the nucleus. Probably functions as an alternative splicing regulator. May regulate the mRNA splicing of genes such as CLK1. May act by regulating members of the CLK kinase family. In Homo sapiens (Human), this protein is CLK4-associating serine/arginine rich protein (CLASRP).